The chain runs to 310 residues: Methionyl-tRNA formyltransferase (310 aa).

110-113 (SVLP) lines the (6S)-5,6,7,8-tetrahydrofolate pocket.

This sequence belongs to the Fmt family.

The enzyme catalyses L-methionyl-tRNA(fMet) + (6R)-10-formyltetrahydrofolate = N-formyl-L-methionyl-tRNA(fMet) + (6S)-5,6,7,8-tetrahydrofolate + H(+). Functionally, attaches a formyl group to the free amino group of methionyl-tRNA(fMet). The formyl group appears to play a dual role in the initiator identity of N-formylmethionyl-tRNA by promoting its recognition by IF2 and preventing the misappropriation of this tRNA by the elongation apparatus. The sequence is that of Methionyl-tRNA formyltransferase from Mycolicibacterium vanbaalenii (strain DSM 7251 / JCM 13017 / BCRC 16820 / KCTC 9966 / NRRL B-24157 / PYR-1) (Mycobacterium vanbaalenii).